The primary structure comprises 586 residues: UvrABC system protein C (586 aa).

Residues 17–94 form the GIY-YIG domain; sequence HKPGCYLWKD…IKQYKPRFNL (78 aa). The UVR domain occupies 201–236; that stretch reads EQVLNHLQQQEIKASEQQNFEAARHFLDLQKAVLEL.

Belongs to the UvrC family. Interacts with UvrB in an incision complex.

It localises to the cytoplasm. The UvrABC repair system catalyzes the recognition and processing of DNA lesions. UvrC both incises the 5' and 3' sides of the lesion. The N-terminal half is responsible for the 3' incision and the C-terminal half is responsible for the 5' incision. This is UvrABC system protein C from Mycoplasma pneumoniae (strain ATCC 29342 / M129 / Subtype 1) (Mycoplasmoides pneumoniae).